The sequence spans 122 residues: Large ribosomal subunit protein uL14 (122 aa).

Belongs to the universal ribosomal protein uL14 family. As to quaternary structure, part of the 50S ribosomal subunit. Forms a cluster with proteins L3 and L19. In the 70S ribosome, L14 and L19 interact and together make contacts with the 16S rRNA in bridges B5 and B8.

Binds to 23S rRNA. Forms part of two intersubunit bridges in the 70S ribosome. The protein is Large ribosomal subunit protein uL14 of Geobacillus kaustophilus (strain HTA426).